Here is a 105-residue protein sequence, read N- to C-terminus: Large ribosomal subunit protein uL23 (105 aa).

This sequence belongs to the universal ribosomal protein uL23 family. In terms of assembly, part of the 50S ribosomal subunit. Contacts protein L29, and trigger factor when it is bound to the ribosome.

Functionally, one of the early assembly proteins it binds 23S rRNA. One of the proteins that surrounds the polypeptide exit tunnel on the outside of the ribosome. Forms the main docking site for trigger factor binding to the ribosome. The sequence is that of Large ribosomal subunit protein uL23 from Herminiimonas arsenicoxydans.